A 259-amino-acid chain; its full sequence is BTB/POZ domain-containing protein KCTD4 (259 aa).

A disordered region spans residues 1–25 (MERKINRREKEKEYEGKHNSLEDTD). In terms of domain architecture, BTB spans 33–134 (TLMTLNVGGY…EVKSRWEKEQ (102 aa)).

The sequence is that of BTB/POZ domain-containing protein KCTD4 (KCTD4) from Homo sapiens (Human).